Here is a 312-residue protein sequence, read N- to C-terminus: D-alanine--D-alanine ligase (312 aa).

The 201-residue stretch at 108–308 folds into the ATP-grasp domain; it reads KLVWQQTGIP…YSELVVKVLS (201 aa). 138-193 is a binding site for ATP; the sequence is AAKLGVPLFVKPASEGSSVAVEKVKSADALPAALEEAAKHDKIVIVEKSIEGGGEY. Mg(2+)-binding residues include Asp262, Glu275, and Asn277.

It belongs to the D-alanine--D-alanine ligase family. Mg(2+) is required as a cofactor. It depends on Mn(2+) as a cofactor.

It is found in the cytoplasm. It carries out the reaction 2 D-alanine + ATP = D-alanyl-D-alanine + ADP + phosphate + H(+). The protein operates within cell wall biogenesis; peptidoglycan biosynthesis. Cell wall formation. The polypeptide is D-alanine--D-alanine ligase (Burkholderia pseudomallei (strain 668)).